Consider the following 121-residue polypeptide: Small ribosomal subunit protein uS13 (121 aa).

The segment at 91–121 is disordered; sequence HRRGLPVRGQNSKNNARTRKGPRRTVANKKK. Basic residues predominate over residues 106-121; the sequence is ARTRKGPRRTVANKKK.

It belongs to the universal ribosomal protein uS13 family. In terms of assembly, part of the 30S ribosomal subunit. Forms a loose heterodimer with protein S19. Forms two bridges to the 50S subunit in the 70S ribosome.

Its function is as follows. Located at the top of the head of the 30S subunit, it contacts several helices of the 16S rRNA. In the 70S ribosome it contacts the 23S rRNA (bridge B1a) and protein L5 of the 50S subunit (bridge B1b), connecting the 2 subunits; these bridges are implicated in subunit movement. Contacts the tRNAs in the A and P-sites. The polypeptide is Small ribosomal subunit protein uS13 (Bacillus cereus (strain AH187)).